Here is a 336-residue protein sequence, read N- to C-terminus: Oxaloacetate decarboxylase (336 aa).

One can recognise a Pyruvate carboxyltransferase domain in the interval 10-258; that stretch reads PIVLDTTVRD…LAAVDLDRIF (249 aa). Mn(2+) is bound by residues Asp19, His197, and His199.

This sequence belongs to the 4-hydroxy-2-oxovalerate aldolase family. Homodimer. A divalent metal cation serves as cofactor.

The enzyme catalyses oxaloacetate + H(+) = pyruvate + CO2. Its activity is regulated as follows. Activity is abolished upon incubation with Chelex and EDTA. In terms of biological role, exhibits oxaloacetate decarboxylase activity. Lacks any detectable aldolase activity with 4-hydroxy-2-oxopentanoate (HOPA), 4-hydroxy-2-oxohexanoate (HOHA) or other 4-hydroxy-2-oxoacids. This is Oxaloacetate decarboxylase from Mycobacterium tuberculosis (strain ATCC 25618 / H37Rv).